Reading from the N-terminus, the 432-residue chain is Enolase (432 aa).

Gln163 serves as a coordination point for (2R)-2-phosphoglycerate. The Proton donor role is filled by Glu205. Mg(2+) is bound by residues Asp242, Glu288, and Asp315. Lys340, Arg369, Ser370, and Lys391 together coordinate (2R)-2-phosphoglycerate. Lys340 (proton acceptor) is an active-site residue.

It belongs to the enolase family. As to quaternary structure, homodimer. It depends on Mg(2+) as a cofactor.

It localises to the cytoplasm. The protein resides in the secreted. The protein localises to the cell surface. The enzyme catalyses (2R)-2-phosphoglycerate = phosphoenolpyruvate + H2O. It participates in carbohydrate degradation; glycolysis; pyruvate from D-glyceraldehyde 3-phosphate: step 4/5. Its activity is regulated as follows. The covalent binding to the substrate causes inactivation of the enzyme, and possibly serves as a signal for the export of the protein. Functionally, catalyzes the reversible conversion of 2-phosphoglycerate (2-PG) into phosphoenolpyruvate (PEP). It is essential for the degradation of carbohydrates via glycolysis. This is Enolase from Enterococcus hirae.